Reading from the N-terminus, the 291-residue chain is Lipoyl synthase (291 aa).

[4Fe-4S] cluster contacts are provided by Cys-33, Cys-38, Cys-44, Cys-59, Cys-63, Cys-66, and Ser-274. The region spanning 45–263 is the Radical SAM core domain; that stretch reads WGEGTATFLI…REAAEAMGFK (219 aa).

It belongs to the radical SAM superfamily. Lipoyl synthase family. It depends on [4Fe-4S] cluster as a cofactor.

The protein localises to the cytoplasm. The enzyme catalyses [[Fe-S] cluster scaffold protein carrying a second [4Fe-4S](2+) cluster] + N(6)-octanoyl-L-lysyl-[protein] + 2 oxidized [2Fe-2S]-[ferredoxin] + 2 S-adenosyl-L-methionine + 4 H(+) = [[Fe-S] cluster scaffold protein] + N(6)-[(R)-dihydrolipoyl]-L-lysyl-[protein] + 4 Fe(3+) + 2 hydrogen sulfide + 2 5'-deoxyadenosine + 2 L-methionine + 2 reduced [2Fe-2S]-[ferredoxin]. It participates in protein modification; protein lipoylation via endogenous pathway; protein N(6)-(lipoyl)lysine from octanoyl-[acyl-carrier-protein]: step 2/2. Catalyzes the radical-mediated insertion of two sulfur atoms into the C-6 and C-8 positions of the octanoyl moiety bound to the lipoyl domains of lipoate-dependent enzymes, thereby converting the octanoylated domains into lipoylated derivatives. The protein is Lipoyl synthase of Pyrobaculum calidifontis (strain DSM 21063 / JCM 11548 / VA1).